A 164-amino-acid polypeptide reads, in one-letter code: Protein-export protein SecB (164 aa).

The protein belongs to the SecB family. In terms of assembly, homotetramer, a dimer of dimers. One homotetramer interacts with 1 SecA dimer.

It is found in the cytoplasm. One of the proteins required for the normal export of preproteins out of the cell cytoplasm. It is a molecular chaperone that binds to a subset of precursor proteins, maintaining them in a translocation-competent state. It also specifically binds to its receptor SecA. This Janthinobacterium sp. (strain Marseille) (Minibacterium massiliensis) protein is Protein-export protein SecB.